The sequence spans 283 residues: 4-hydroxy-3-methylbut-2-enyl diphosphate reductase (283 aa).

Residue Cys12 participates in [4Fe-4S] cluster binding. His40 and His73 together coordinate (2E)-4-hydroxy-3-methylbut-2-enyl diphosphate. Dimethylallyl diphosphate is bound by residues His40 and His73. Isopentenyl diphosphate is bound by residues His40 and His73. Cys95 serves as a coordination point for [4Fe-4S] cluster. His123 serves as a coordination point for (2E)-4-hydroxy-3-methylbut-2-enyl diphosphate. Residue His123 coordinates dimethylallyl diphosphate. His123 provides a ligand contact to isopentenyl diphosphate. The Proton donor role is filled by Glu125. Thr161 serves as a coordination point for (2E)-4-hydroxy-3-methylbut-2-enyl diphosphate. Cys189 provides a ligand contact to [4Fe-4S] cluster. Residues Ser217, Asn219, and Ser261 each coordinate (2E)-4-hydroxy-3-methylbut-2-enyl diphosphate. Ser217, Asn219, and Ser261 together coordinate dimethylallyl diphosphate. Residues Ser217, Asn219, and Ser261 each coordinate isopentenyl diphosphate.

It belongs to the IspH family. [4Fe-4S] cluster serves as cofactor.

The enzyme catalyses isopentenyl diphosphate + 2 oxidized [2Fe-2S]-[ferredoxin] + H2O = (2E)-4-hydroxy-3-methylbut-2-enyl diphosphate + 2 reduced [2Fe-2S]-[ferredoxin] + 2 H(+). The catalysed reaction is dimethylallyl diphosphate + 2 oxidized [2Fe-2S]-[ferredoxin] + H2O = (2E)-4-hydroxy-3-methylbut-2-enyl diphosphate + 2 reduced [2Fe-2S]-[ferredoxin] + 2 H(+). It participates in isoprenoid biosynthesis; dimethylallyl diphosphate biosynthesis; dimethylallyl diphosphate from (2E)-4-hydroxy-3-methylbutenyl diphosphate: step 1/1. It functions in the pathway isoprenoid biosynthesis; isopentenyl diphosphate biosynthesis via DXP pathway; isopentenyl diphosphate from 1-deoxy-D-xylulose 5-phosphate: step 6/6. Catalyzes the conversion of 1-hydroxy-2-methyl-2-(E)-butenyl 4-diphosphate (HMBPP) into a mixture of isopentenyl diphosphate (IPP) and dimethylallyl diphosphate (DMAPP). Acts in the terminal step of the DOXP/MEP pathway for isoprenoid precursor biosynthesis. This chain is 4-hydroxy-3-methylbut-2-enyl diphosphate reductase, found in Geobacter sp. (strain M21).